The chain runs to 282 residues: Formamidopyrimidine-DNA glycosylase (282 aa).

Pro-2 (schiff-base intermediate with DNA) is an active-site residue. The active-site Proton donor is the Glu-3. The active-site Proton donor; for beta-elimination activity is Lys-61. Positions 93, 112, and 158 each coordinate DNA. The FPG-type zinc-finger motif lies at 244 to 278 (DAYGREGEPCRRCGAIMRRDKFMNRSSFYCPRCQP). Residue Arg-268 is the Proton donor; for delta-elimination activity of the active site.

It belongs to the FPG family. Monomer. Requires Zn(2+) as cofactor.

The enzyme catalyses Hydrolysis of DNA containing ring-opened 7-methylguanine residues, releasing 2,6-diamino-4-hydroxy-5-(N-methyl)formamidopyrimidine.. It catalyses the reaction 2'-deoxyribonucleotide-(2'-deoxyribose 5'-phosphate)-2'-deoxyribonucleotide-DNA = a 3'-end 2'-deoxyribonucleotide-(2,3-dehydro-2,3-deoxyribose 5'-phosphate)-DNA + a 5'-end 5'-phospho-2'-deoxyribonucleoside-DNA + H(+). In terms of biological role, involved in base excision repair of DNA damaged by oxidation or by mutagenic agents. Acts as a DNA glycosylase that recognizes and removes damaged bases. Has a preference for oxidized purines, such as 7,8-dihydro-8-oxoguanine (8-oxoG). Has AP (apurinic/apyrimidinic) lyase activity and introduces nicks in the DNA strand. Cleaves the DNA backbone by beta-delta elimination to generate a single-strand break at the site of the removed base with both 3'- and 5'-phosphates. This chain is Formamidopyrimidine-DNA glycosylase, found in Mycolicibacterium gilvum (strain PYR-GCK) (Mycobacterium gilvum (strain PYR-GCK)).